Reading from the N-terminus, the 354-residue chain is Probable butyrate kinase (354 aa).

The protein belongs to the acetokinase family.

It localises to the cytoplasm. It carries out the reaction butanoate + ATP = butanoyl phosphate + ADP. This is Probable butyrate kinase from Phocaeicola vulgatus (strain ATCC 8482 / DSM 1447 / JCM 5826 / CCUG 4940 / NBRC 14291 / NCTC 11154) (Bacteroides vulgatus).